The primary structure comprises 546 residues: 5'-nucleotidase domain-containing protein 3 (546 aa).

Asp-100 serves as the catalytic Nucleophile. Asp-100 and Asp-102 together coordinate Mg(2+). Asp-102 functions as the Proton donor in the catalytic mechanism. Substrate is bound at residue 249-257 (KDSIRDVHI). Asp-387 contributes to the Mg(2+) binding site.

Belongs to the 5'(3')-deoxyribonucleotidase family. It depends on Mg(2+) as a cofactor.

The chain is 5'-nucleotidase domain-containing protein 3 (Nt5dc3) from Mus musculus (Mouse).